Reading from the N-terminus, the 88-residue chain is uncharacterized protein (88 aa).

An N-terminal signal peptide occupies residues 1-23; the sequence is MAVSGLRLTIVWGLLVLILTCQA. Over residues 25–40 the composition is skewed to basic and acidic residues; the sequence is DKPEGKPDEQPHDSGK. The disordered stretch occupies residues 25-45; the sequence is DKPEGKPDEQPHDSGKNSEPA.

Its subcellular location is the secreted. This is an uncharacterized protein from Bos taurus (Bovine).